The primary structure comprises 232 residues: Uracil phosphoribosyltransferase (232 aa).

38–42 lines the GTP pocket; it reads KGLVK. Residues arginine 87, arginine 112, and 140-148 each bind 5-phospho-alpha-D-ribose 1-diphosphate; that span reads DPMIATGST. Uracil contacts are provided by residues isoleucine 204 and 209-211; that span reads GDA. A 5-phospho-alpha-D-ribose 1-diphosphate-binding site is contributed by aspartate 210.

Belongs to the UPRTase family. Requires Mg(2+) as cofactor.

The enzyme catalyses UMP + diphosphate = 5-phospho-alpha-D-ribose 1-diphosphate + uracil. It participates in pyrimidine metabolism; UMP biosynthesis via salvage pathway; UMP from uracil: step 1/1. With respect to regulation, allosterically activated by GTP. Its function is as follows. Catalyzes the conversion of uracil and 5-phospho-alpha-D-ribose 1-diphosphate (PRPP) to UMP and diphosphate. The sequence is that of Uracil phosphoribosyltransferase from Thermococcus sibiricus (strain DSM 12597 / MM 739).